Here is a 328-residue protein sequence, read N- to C-terminus: Carbonic anhydrase-related protein 11 (328 aa).

The first 23 residues, 1 to 23, serve as a signal peptide directing secretion; sequence MGAAPRLSAPRVLVLWAALGAAA. The Alpha-carbonic anhydrase domain maps to 33–303; it reads DWWSYKDNLQ…LAHRALRGNR (271 aa). Residue N118 is glycosylated (N-linked (GlcNAc...) asparagine). A disordered region spans residues 300–328; sequence RGNRDPRHPERRCRGPNYRLHVDDVPHGL. Basic and acidic residues predominate over residues 319-328; the sequence is LHVDDVPHGL.

This sequence belongs to the alpha-carbonic anhydrase family.

It is found in the secreted. Its function is as follows. Does not have a catalytic activity. The chain is Carbonic anhydrase-related protein 11 (CA11) from Ovis aries (Sheep).